The chain runs to 25 residues: Large ribosomal subunit protein uL29 (25 aa).

It belongs to the universal ribosomal protein uL29 family.

This Brevundimonas vesicularis (Pseudomonas vesicularis) protein is Large ribosomal subunit protein uL29 (rpmC).